A 725-amino-acid polypeptide reads, in one-letter code: Ribosomal RNA large subunit methyltransferase K/L (725 aa).

Positions 46-157 constitute a THUMP domain; that stretch reads VAYRLCLWSR…RGEAVLSLDL (112 aa).

The protein belongs to the methyltransferase superfamily. RlmKL family.

The protein localises to the cytoplasm. The enzyme catalyses guanosine(2445) in 23S rRNA + S-adenosyl-L-methionine = N(2)-methylguanosine(2445) in 23S rRNA + S-adenosyl-L-homocysteine + H(+). It carries out the reaction guanosine(2069) in 23S rRNA + S-adenosyl-L-methionine = N(2)-methylguanosine(2069) in 23S rRNA + S-adenosyl-L-homocysteine + H(+). Its function is as follows. Specifically methylates the guanine in position 2445 (m2G2445) and the guanine in position 2069 (m7G2069) of 23S rRNA. The sequence is that of Ribosomal RNA large subunit methyltransferase K/L from Ectopseudomonas mendocina (strain ymp) (Pseudomonas mendocina).